We begin with the raw amino-acid sequence, 296 residues long: uncharacterized protein (296 aa).

Residues 7–26 (CFSLVCALGASTYLLWRGWL) form a helical membrane-spanning segment.

It is found in the membrane. This is an uncharacterized protein from Treponema pallidum (strain Nichols).